The chain runs to 191 residues: Glutathione-dependent formaldehyde-activating enzyme (191 aa).

Residues 22–169 form the CENP-V/GFA domain; the sequence is FAGGTLQCLC…LTELGLTPYD (148 aa). Residues Cys-29, Cys-31, Cys-50, Cys-52, Cys-55, Cys-97, and Cys-100 each coordinate Zn(2+).

This sequence belongs to the Gfa family. Zn(2+) is required as a cofactor.

It catalyses the reaction S-(hydroxymethyl)glutathione = glutathione + formaldehyde. It functions in the pathway one-carbon metabolism; formaldehyde degradation; formate from formaldehyde (glutathione route): step 1/3. Catalyzes the condensation of formaldehyde and glutathione to S-hydroxymethylglutathione. This Xanthomonas campestris pv. campestris (strain 8004) protein is Glutathione-dependent formaldehyde-activating enzyme.